Consider the following 265-residue polypeptide: Orotidine 5'-phosphate decarboxylase (265 aa).

Substrate is bound by residues Asp38, 60–62, 92–101, Tyr218, and Arg236; these read KTH and DRKFADIGKT. The Proton donor role is filled by Lys94.

It belongs to the OMP decarboxylase family.

It carries out the reaction orotidine 5'-phosphate + H(+) = UMP + CO2. It functions in the pathway pyrimidine metabolism; UMP biosynthesis via de novo pathway; UMP from orotate: step 2/2. The sequence is that of Orotidine 5'-phosphate decarboxylase (URA3) from Cyberlindnera fabianii (Yeast).